The following is a 238-amino-acid chain: Probable transcriptional regulatory protein SSU05_0402 (238 aa).

This sequence belongs to the TACO1 family. YeeN subfamily.

It is found in the cytoplasm. This is Probable transcriptional regulatory protein SSU05_0402 from Streptococcus suis (strain 05ZYH33).